The following is an 89-amino-acid chain: Small ribosomal subunit protein uS15 (89 aa).

This sequence belongs to the universal ribosomal protein uS15 family. In terms of assembly, part of the 30S ribosomal subunit. Forms a bridge to the 50S subunit in the 70S ribosome, contacting the 23S rRNA.

Its function is as follows. One of the primary rRNA binding proteins, it binds directly to 16S rRNA where it helps nucleate assembly of the platform of the 30S subunit by binding and bridging several RNA helices of the 16S rRNA. In terms of biological role, forms an intersubunit bridge (bridge B4) with the 23S rRNA of the 50S subunit in the ribosome. The protein is Small ribosomal subunit protein uS15 of Herminiimonas arsenicoxydans.